We begin with the raw amino-acid sequence, 373 residues long: Dual-specificity RNA methyltransferase RlmN (373 aa).

The active-site Proton acceptor is the E94. The Radical SAM core domain maps to 100 to 339; that stretch reads EDDRATLCVS…VIVRKTRGDD (240 aa). C107 and C344 are joined by a disulfide. [4Fe-4S] cluster contacts are provided by C114, C118, and C121. Residues 168-169, S200, 222-224, and N301 contribute to the S-adenosyl-L-methionine site; these read GE and SIH. The S-methylcysteine intermediate role is filled by C344.

Belongs to the radical SAM superfamily. RlmN family. [4Fe-4S] cluster serves as cofactor.

It is found in the cytoplasm. The catalysed reaction is adenosine(2503) in 23S rRNA + 2 reduced [2Fe-2S]-[ferredoxin] + 2 S-adenosyl-L-methionine = 2-methyladenosine(2503) in 23S rRNA + 5'-deoxyadenosine + L-methionine + 2 oxidized [2Fe-2S]-[ferredoxin] + S-adenosyl-L-homocysteine. The enzyme catalyses adenosine(37) in tRNA + 2 reduced [2Fe-2S]-[ferredoxin] + 2 S-adenosyl-L-methionine = 2-methyladenosine(37) in tRNA + 5'-deoxyadenosine + L-methionine + 2 oxidized [2Fe-2S]-[ferredoxin] + S-adenosyl-L-homocysteine. In terms of biological role, specifically methylates position 2 of adenine 2503 in 23S rRNA and position 2 of adenine 37 in tRNAs. m2A2503 modification seems to play a crucial role in the proofreading step occurring at the peptidyl transferase center and thus would serve to optimize ribosomal fidelity. The protein is Dual-specificity RNA methyltransferase RlmN of Shewanella pealeana (strain ATCC 700345 / ANG-SQ1).